Reading from the N-terminus, the 238-residue chain is Complement C1q-like protein 4 (238 aa).

An N-terminal signal peptide occupies residues 1 to 15; the sequence is MVLLLLVAIPLLVHS. Residues 36 to 101 are disordered; the sequence is GPRGPGPDGA…PPGPGPGGVA (66 aa). The Collagen-like domain maps to 53–96; that stretch reads PPGAKGEVGRRGKAGLRGPPGPPGPRGPPGEPGRPGPPGPPGPG. Residues 71-96 show a composition bias toward pro residues; that stretch reads PPGPPGPRGPPGEPGRPGPPGPPGPG. In terms of domain architecture, C1q spans 105 to 238; sequence GYVPRIAFYA…TFSGFIIYPD (134 aa).

Forms homooligomers, predominantly dimers or trimers. Forms heterooligomers with C1QL1, C1QL2 and C1QL3, when proteins are coexpressed; this interaction does not occur after secretion. Interacts with ADGRB3. Highest expression levels in testis and adipose tissue, lower levels in skeletal muscle and kidney.

The protein resides in the secreted. Its function is as follows. May regulate the number of excitatory synapses that are formed on hippocampus neurons. Has no effect on inhibitory synapses. May inhibit adipocyte differentiation at an early stage of the process. This is Complement C1q-like protein 4 (C1QL4) from Homo sapiens (Human).